The chain runs to 97 residues: MSNPPTRPTLYNLVNADGELSYRARDLVQDFSVPIPHELPDPDLVHSIQDFATEYMLATGKKSFECLDESALLGLGYLVTEWMDAMVTDCLEEFEER.

Component of the UAF (upstream activation factor) complex which consists of spp27/uaf30, rrn5, rrn10, and histones H3 and H4. Interacts with rrn5 and spp27/uaf30.

The protein localises to the cytoplasm. It is found in the nucleus. Its subcellular location is the nucleolus. Component of the UAF (upstream activation factor) complex which interacts with the upstream element of the RNA polymerase I promoter and forms a stable preinitiation complex. UAF seems to stimulate basal transcription to a fully activated level. This Schizosaccharomyces pombe (strain 972 / ATCC 24843) (Fission yeast) protein is RNA polymerase I-specific transcription initiation factor rrn10 (rrn10).